The chain runs to 166 residues: Nicotine metabolites export pump subunit NepB (166 aa).

Transmembrane regions (helical) follow at residues L51–L71, F77–L97, V108–I128, and V133–L153.

The protein belongs to the drug/metabolite transporter (DMT) superfamily. Small multidrug resistance (SMR) (TC 2.A.7.1) family. NepA/NepB subfamily. The efflux pump is composed of NepA and NepB.

It is found in the cell membrane. In terms of biological role, component of an efflux pump responsible for the transport of nicotine breakdown products, in particular methylamine, out of the cell. This pump apparently serves as a metabolic valve for nicotine catabolites and may protect the bacteria from the potentially toxic side effects of these compounds. The chain is Nicotine metabolites export pump subunit NepB (nepB) from Paenarthrobacter nicotinovorans (Arthrobacter nicotinovorans).